Consider the following 620-residue polypeptide: Delta(14)-sterol reductase LBR (620 aa).

Residues 1–62 (MPGRKFADGE…DIKPLKSFKQ (62 aa)) enclose the Tudor domain. Topologically, residues 1–215 (MPGRKFADGE…TPQRRDLEFG (215 aa)) are nuclear. The interval 52-111 (SDIKPLKSFKQRKSGSTSSSPSRRRSSRSRSRSRSRSPGRAPKGSRRSVSASYQADAKEK) is disordered. Lys-55 bears the N6-acetyllysine mark. Residues Ser-59 and Ser-67 each carry the phosphoserine modification. A phosphoserine; by CDK1 mark is found at Ser-71 and Ser-86. A compositionally biased stretch (basic residues) spans 73–88 (SRRRSSRSRSRSRSRS). Position 88 is a phosphoserine (Ser-88). O-linked (GlcNAc) serine glycosylation is present at Ser-96. Residues Ser-99 and Ser-101 each carry the phosphoserine modification. Position 123 is a phosphothreonine (Thr-123). A Phosphoserine modification is found at Ser-133. Phosphothreonine is present on Thr-205. 8 helical membrane-spanning segments follow: residues 216–236 (GVPG…LLLL), 263–283 (VCGV…LPVG), 304–324 (LYAF…DIEL), 331–351 (FLQF…YLYA), 452–472 (IIHD…VPFT), 486–506 (DLSW…YVIF), 525–547 (LAHL…WWGF), and 566–586 (PCGF…ALLI). 2 positions are modified to N6-acetyllysine: Lys-599 and Lys-606.

This sequence belongs to the ERG4/ERG24 family. As to quaternary structure, interacts with CBX5. Interacts with DNA. Interaction with DNA is sequence independent with higher affinity for supercoiled and relaxed circular DNA than linear DNA. Interacts with lamin B. Interacts with CLNK. Interacts with TMEM147; promoting LBR localization to the nucleus inner membrane. Post-translationally, phosphorylated by CDK1 in mitosis when the inner nuclear membrane breaks down into vesicles that dissociate from the lamina and the chromatin. It is phosphorylated by different protein kinases in interphase when the membrane is associated with these structures. Phosphorylation of LBR and HP1 proteins may be responsible for some of the alterations in chromatin organization and nuclear structure which occur at various times during the cell cycle. Phosphorylated by SRPK1. In late anaphase LBR is dephosphorylated, probably by PP1 and/or PP2A, allowing reassociation with chromatin.

It localises to the nucleus inner membrane. It is found in the nucleus. The protein resides in the cytoplasm. Its subcellular location is the endoplasmic reticulum membrane. It catalyses the reaction 5alpha-cholest-8,14-dien-3beta-ol + NADPH + H(+) = 5alpha-cholest-8-en-3beta-ol + NADP(+). The enzyme catalyses 4,4-dimethyl-5alpha-cholesta-8,24-dien-3beta-ol + NADP(+) = 4,4-dimethyl-5alpha-cholesta-8,14,24-trien-3beta-ol + NADPH + H(+). The catalysed reaction is 4,4-dimethyl-8,14-cholestadien-3beta-ol + NADPH + H(+) = 4,4-dimethyl-5alpha-cholest-8-en-3beta-ol + NADP(+). It functions in the pathway steroid biosynthesis; cholesterol biosynthesis. Catalyzes the reduction of the C14-unsaturated bond of lanosterol, as part of the metabolic pathway leading to cholesterol biosynthesis. Plays a critical role in myeloid cell cholesterol biosynthesis which is essential to both myeloid cell growth and functional maturation. Mediates the activation of NADPH oxidases, perhaps by maintaining critical levels of cholesterol required for membrane lipid raft formation during neutrophil differentiation. Anchors the lamina and the heterochromatin to the inner nuclear membrane. This is Delta(14)-sterol reductase LBR (Lbr) from Rattus norvegicus (Rat).